Here is a 146-residue protein sequence, read N- to C-terminus: Multiple coagulation factor deficiency protein 2 (146 aa).

The first 26 residues, 1 to 26 (MTMRSLLRTPFLCGLLWAFCAPGARA), serve as a signal peptide directing secretion. Residues 68-103 (SPQELQLHYFKMHDYDGNNLLDGLELSTAITHVHKE) enclose the EF-hand 1 domain. Residues Asp-81, Asp-83, Asn-85, and Glu-92 each coordinate Ca(2+). Ser-106 carries the post-translational modification Phosphoserine. Residues 116 to 146 (ELINIIDGVLRDDDKNNDGYIDYAEFAKSLQ) form the EF-hand 2 domain. Ca(2+)-binding residues include Asp-129, Asn-131, Asp-133, Tyr-135, and Glu-140.

As to quaternary structure, interacts in a calcium-dependent manner with LMAN1.

The protein localises to the endoplasmic reticulum-Golgi intermediate compartment. It is found in the endoplasmic reticulum. Its subcellular location is the golgi apparatus. Functionally, the MCFD2-LMAN1 complex forms a specific cargo receptor for the ER-to-Golgi transport of selected proteins. Plays a role in the secretion of coagulation factors. The chain is Multiple coagulation factor deficiency protein 2 (MCFD2) from Homo sapiens (Human).